Consider the following 317-residue polypeptide: Protein IMPACT-B (317 aa).

The RWD domain occupies 17-118 (EEIEALSSIY…EKIREFLTEK (102 aa)). Positions 296–317 (DSTEETSKAGGKSKKPKSKKTK) are disordered. Over residues 306-317 (GKSKKPKSKKTK) the composition is skewed to basic residues.

This sequence belongs to the IMPACT family. In terms of assembly, interacts with GCN1; prevents the interaction of GCN1 with EIF2AK4/GCN2 and inhibits EIF2AK4/GCN2 kinase activity. Interaction with RPL39; this interaction occurs in a GCN1-independent manner. Associates with ribosomes; this interaction occurs in a GCN1-independent manner. Associates with actin; this interaction occurs in a GCN1-independent manner.

It is found in the cytoplasm. Translational regulator that ensures constant high levels of translation upon a variety of stress conditions, such as amino acid starvation, UV-C irradiation, proteasome inhibitor treatment and glucose deprivation. Plays a role as a negative regulator of the EIF2AK4/GCN2 kinase activity; impairs GCN1-mediated EIF2AK4/GCN2 activation, and hence EIF2AK4/GCN2-mediated eIF-2-alpha phosphorylation and subsequent down-regulation of protein synthesis. Plays a role in differentiation of neuronal cells by stimulating neurite outgrowth. This Xenopus tropicalis (Western clawed frog) protein is Protein IMPACT-B (impact-B).